We begin with the raw amino-acid sequence, 1071 residues long: Fused isobutyryl-CoA mutase (1071 aa).

Positions 12-149 (PVRFVTSAAL…QTCDVDLTGE (138 aa)) constitute a B12-binding domain. H25 contacts adenosylcob(III)alamin. The segment at 153–400 (VEAVLAGERT…YQHLLELLGA (248 aa)) is GTPase chaperone MeaI. A GTP-binding site is contributed by 203-208 (GSGKSS). S207, V232, D233, and D246 together coordinate Mg(2+). R249 lines the GTP pocket. Mg(2+) is bound by residues E293 and T294. Residue 340 to 343 (NKFE) coordinates GTP. A linker region spans residues 401-558 (RGLPVDEGVL…RSENLPGHFP (158 aa)). Residues F566, R601, R707, Y751, S800, R835, and K840 each coordinate substrate. 2 residues coordinate GTP: E952 and N1070.

This sequence belongs to the IcmF family. Homodimer. Requires adenosylcob(III)alamin as cofactor. The cofactor is Mg(2+).

The enzyme catalyses 2-methylpropanoyl-CoA = butanoyl-CoA. The catalysed reaction is GTP + H2O = GDP + phosphate + H(+). In terms of biological role, catalyzes the reversible interconversion of isobutyryl-CoA and n-butyryl-CoA, using radical chemistry. Also exhibits GTPase activity, associated with its G-protein domain (MeaI) that functions as a chaperone that assists cofactor delivery and proper holo-enzyme assembly. Does not exhibit methylmalonyl-CoA mutase (MCM) activity. This Nocardia farcinica (strain IFM 10152) protein is Fused isobutyryl-CoA mutase.